A 142-amino-acid polypeptide reads, in one-letter code: Large ribosomal subunit protein uL13 (142 aa).

The protein belongs to the universal ribosomal protein uL13 family. In terms of assembly, part of the 50S ribosomal subunit.

Functionally, this protein is one of the early assembly proteins of the 50S ribosomal subunit, although it is not seen to bind rRNA by itself. It is important during the early stages of 50S assembly. The chain is Large ribosomal subunit protein uL13 from Herminiimonas arsenicoxydans.